Reading from the N-terminus, the 413-residue chain is Arginine biosynthesis bifunctional protein ArgJ (413 aa).

6 residues coordinate substrate: Thr160, Lys186, Thr197, Glu277, Asn408, and Thr413. The active-site Nucleophile is Thr197.

It belongs to the ArgJ family. As to quaternary structure, heterotetramer of two alpha and two beta chains.

It localises to the cytoplasm. The enzyme catalyses N(2)-acetyl-L-ornithine + L-glutamate = N-acetyl-L-glutamate + L-ornithine. It carries out the reaction L-glutamate + acetyl-CoA = N-acetyl-L-glutamate + CoA + H(+). The protein operates within amino-acid biosynthesis; L-arginine biosynthesis; L-ornithine and N-acetyl-L-glutamate from L-glutamate and N(2)-acetyl-L-ornithine (cyclic): step 1/1. It participates in amino-acid biosynthesis; L-arginine biosynthesis; N(2)-acetyl-L-ornithine from L-glutamate: step 1/4. Functionally, catalyzes two activities which are involved in the cyclic version of arginine biosynthesis: the synthesis of N-acetylglutamate from glutamate and acetyl-CoA as the acetyl donor, and of ornithine by transacetylation between N(2)-acetylornithine and glutamate. The protein is Arginine biosynthesis bifunctional protein ArgJ of Prochlorococcus marinus (strain SARG / CCMP1375 / SS120).